A 107-amino-acid chain; its full sequence is Ig kappa chain V-VI region NQ5-78.2.6 (107 aa).

Residues 1-23 form a framework-1 region; sequence QILLTQSPAIMSASPGQKVTMTC. A disulfide bond links cysteine 23 and cysteine 87. The complementarity-determining-1 stretch occupies residues 24–33; sequence SASSSVSYMH. The interval 34–48 is framework-2; the sequence is WYQQKSGTSPKRWIY. The interval 49–55 is complementarity-determining-2; it reads DTSKLAS. A framework-3 region spans residues 56-87; that stretch reads GVPARFXGSGSATSYSLTITSMQAEDAATYYC. Residues 88-96 form a complementarity-determining-3 region; the sequence is QQWSSNPLT. Residues 97–106 are framework-4; it reads FGSGTKLEXK.

Functionally, anti-2-phenyl oxazolone (PHOX) Antibody. This is Ig kappa chain V-VI region NQ5-78.2.6 from Mus musculus (Mouse).